The chain runs to 308 residues: Glycine--tRNA ligase alpha subunit (308 aa).

It belongs to the class-II aminoacyl-tRNA synthetase family. As to quaternary structure, tetramer of two alpha and two beta subunits.

The protein resides in the cytoplasm. The enzyme catalyses tRNA(Gly) + glycine + ATP = glycyl-tRNA(Gly) + AMP + diphosphate. This is Glycine--tRNA ligase alpha subunit from Streptococcus pyogenes serotype M3 (strain SSI-1).